Reading from the N-terminus, the 373-residue chain is NAD-dependent protein deacetylase SIR2rp1 (373 aa).

Residues 12 to 349 form the Deacetylase sirtuin-type domain; it reads HALGEPTVEG…LKLAECLGLR (338 aa). NAD(+) contacts are provided by residues 39–59 and 124–127; these read GAGA…TGIY and QNID. His144 serves as the catalytic Proton acceptor. Zn(2+)-binding residues include Cys152, Cys155, Cys176, and Cys179. Residues 216–218 and 241–243 contribute to the NAD(+) site; these read GTS and NRE. Positions 263 to 313 are disordered; it reads DAVAKEGRSSSSQSRSPSASARREEGGTEDGSSSPNEEVEDASTSSSSDGY. Over residues 271–282 the composition is skewed to low complexity; the sequence is SSSSQSRSPSAS. Cys335 provides a ligand contact to NAD(+).

The protein belongs to the sirtuin family. Class I subfamily. Requires Zn(2+) as cofactor.

It is found in the nucleus. It carries out the reaction N(6)-acetyl-L-lysyl-[protein] + NAD(+) + H2O = 2''-O-acetyl-ADP-D-ribose + nicotinamide + L-lysyl-[protein]. NAD-dependent deacetylase, which probably acts as a regulator of gene expression believed to help form modified chromatin structures on the genes it regulates. The sequence is that of NAD-dependent protein deacetylase SIR2rp1 (SIR2rp1) from Leishmania major.